The chain runs to 155 residues: Small ribosomal subunit protein uS7c (155 aa).

The protein belongs to the universal ribosomal protein uS7 family. In terms of assembly, part of the 30S ribosomal subunit.

It is found in the plastid. It localises to the chloroplast. One of the primary rRNA binding proteins, it binds directly to 16S rRNA where it nucleates assembly of the head domain of the 30S subunit. This is Small ribosomal subunit protein uS7c (rps7) from Cedrus deodara (Deodar cedar).